The chain runs to 851 residues: DNA mismatch repair protein MutS (851 aa).

614-621 (GPNMGGKS) contributes to the ATP binding site.

The protein belongs to the DNA mismatch repair MutS family.

Its function is as follows. This protein is involved in the repair of mismatches in DNA. It is possible that it carries out the mismatch recognition step. This protein has a weak ATPase activity. The chain is DNA mismatch repair protein MutS from Yersinia enterocolitica serotype O:8 / biotype 1B (strain NCTC 13174 / 8081).